The chain runs to 454 residues: LETM1 domain-containing protein YLH47, mitochondrial (454 aa).

The N-terminal 45 residues, 1–45, are a transit peptide targeting the mitochondrion; sequence MLKYRSLPIKRAIHHPAPGITPISPRIMVSRLRVIPSFNLKFNRW. At 46 to 136 the chain is on the mitochondrial intermembrane side; that stretch reads NSSVPESSKK…LKRTTQDIVR (91 aa). Positions 51-73 are disordered; that stretch reads ESSKKELKTTDGNQESASKVSPV. A helical membrane pass occupies residues 137 to 157; that stretch reads LVPFAAFLIIPFAELLLPFAL. The Mitochondrial matrix portion of the chain corresponds to 158 to 454; it reads KLFPNLLPST…IGEAAAIKEK (297 aa). One can recognise a Letm1 RBD domain in the interval 177–371; the sequence is KLENLRNTRK…LCDVLIGIPD (195 aa). A coiled-coil region spans residues 376–423; sequence EVKVNVVKEDEASAKQKLKQLREQEEIMKEEEQQEENAIVSVKDELSL. Basic and acidic residues-rich tracts occupy residues 420-430 and 437-454; these read ELSLDDQDKNI and VKPH…IKEK. The interval 420–454 is disordered; the sequence is ELSLDDQDKNIDAAAPDVKPHDTKPIGEAAAIKEK.

As to quaternary structure, associates with the mitochondrial ribosomes.

It is found in the mitochondrion inner membrane. Functionally, involved in mitochondrial potassium homeostasis through the mitochondrial K(+)/H(+) exchange regulation. This Saccharomyces cerevisiae (strain ATCC 204508 / S288c) (Baker's yeast) protein is LETM1 domain-containing protein YLH47, mitochondrial (YLH47).